Reading from the N-terminus, the 404-residue chain is uncharacterized protein (404 aa).

The next 8 helical transmembrane spans lie at methionine 1–serine 21, valine 32–glycine 52, alanine 89–tyrosine 109, leucine 182–alanine 202, leucine 261–phenylalanine 281, glycine 285–valine 305, alanine 344–leucine 364, and lysine 384–isoleucine 404.

It belongs to the concentrative nucleoside transporter (CNT) (TC 2.A.41) family.

The protein resides in the cell membrane. This is an uncharacterized protein from Bacillus subtilis (strain 168).